A 345-amino-acid polypeptide reads, in one-letter code: N-malonyltransferase FDB2 (345 aa).

Residue Cys-110 is the Acyl-thioester intermediate of the active site. The active-site Proton acceptor is His-158. Residue Asp-173 is part of the active site.

It belongs to the arylamine N-acetyltransferase family.

It functions in the pathway xenobiotic degradation. In terms of biological role, N-malonyltransferase; part of the Fusarium detoxification of benzoxazolinone cluster 2 (FDB2) involved in the degradation of benzoxazolinones produced by the host plant. Maize, wheat, and rye produce the 2 benzoxazinone phytoanticipins 2,4-dihy-droxy-7-methoxy-1,4-benzoxazin-3-one (DIMBOA) and 2,4-dihydroxy-1,4-benzoxazin-3-one (DIBOA) that, due to their inherent instability once released, spontaneously degrade to the more stable corresponding benzoxazolinones, 6-methoxy-2-benzoxazolinone (MBOA) and 2-benzoxazolinone (BOA), respectively. The first step in the detoxification of benzoxazolinones involves the hydrolysis of the cyclic ester bond of benzoxazolinones by the FDB1 cluster gamma-lactamase MBL1 to aminophenols. MBL1 is able to convert BOA into 2-aminophenol (2-AP), as well as MBOA into 5-methoxy-2-aminophenol (2-AMP). The FDB2 cluster N-malonyltransferase FDB2/NAT1 then metabolizes aminophenols via N-malonylation to non-toxic malonamic acids. FDB2/NAT1 converts 2-AP into N-(2-hydroxyphenyl) malonamic acid (HPMA) and 2-AMP into N-(2-hydroxy-4-methoxyphenyl) malonamic acid (HMPMA). The duplicated dienlactone hydrolases DLH1 and DLH2 may provide redundant function for hydrolyzing the lactone moiety in the BOA molecule. The roles of the amidases an other enzymes encoded by the 2 FDB clusters have not been identified so far. This chain is N-malonyltransferase FDB2, found in Gibberella moniliformis (strain M3125 / FGSC 7600) (Maize ear and stalk rot fungus).